The chain runs to 288 residues: 4-diphosphocytidyl-2-C-methyl-D-erythritol kinase (288 aa).

Residue Lys11 is part of the active site. 100–110 is a binding site for ATP; it reads PIAAGLGSGSS. The active site involves Asp140.

It belongs to the GHMP kinase family. IspE subfamily.

It catalyses the reaction 4-CDP-2-C-methyl-D-erythritol + ATP = 4-CDP-2-C-methyl-D-erythritol 2-phosphate + ADP + H(+). Its pathway is isoprenoid biosynthesis; isopentenyl diphosphate biosynthesis via DXP pathway; isopentenyl diphosphate from 1-deoxy-D-xylulose 5-phosphate: step 3/6. Functionally, catalyzes the phosphorylation of the position 2 hydroxy group of 4-diphosphocytidyl-2C-methyl-D-erythritol. The chain is 4-diphosphocytidyl-2-C-methyl-D-erythritol kinase from Wolbachia pipientis wMel.